Here is a 490-residue protein sequence, read N- to C-terminus: Alpha-galactosidase (490 aa).

NAD(+) is bound at residue 4-70; the sequence is FKIAIIGAGS…LPTRVTATTD (67 aa). N150 is a binding site for substrate. C171 lines the Mn(2+) pocket. H172 serves as the catalytic Proton donor. A Mn(2+)-binding site is contributed by H201. Residue Y258 is the Proton acceptor of the active site.

The protein belongs to the glycosyl hydrolase 4 family. Homodimer. Mn(2+) serves as cofactor. It depends on NAD(+) as a cofactor.

The catalysed reaction is Hydrolysis of terminal, non-reducing alpha-D-galactose residues in alpha-D-galactosides, including galactose oligosaccharides, galactomannans and galactolipids.. This chain is Alpha-galactosidase (melA), found in Rhizobium meliloti (strain 1021) (Ensifer meliloti).